The primary structure comprises 444 residues: ATPase PAAT (444 aa).

Phosphoserine is present on residues S177, S182, S254, and S302. Residues 424–444 (PSPGMPLRHYDSRERLSNGER) are disordered. A compositionally biased stretch (basic and acidic residues) spans 431 to 444 (RHYDSRERLSNGER).

Homodimer. Interacts with ABCB7, ABCB8/MITOSUR and ABCB10.

The protein localises to the cytoplasm. Its subcellular location is the mitochondrion. It carries out the reaction ATP + H2O = ADP + phosphate + H(+). Its function is as follows. ATPase that regulates mitochondrial ABC transporters ABCB7, ABCB8/MITOSUR and ABCB10. Regulates mitochondrial ferric concentration and heme biosynthesis and plays a role in the maintenance of mitochondrial homeostasis and cell survival. The protein is ATPase PAAT of Rattus norvegicus (Rat).